Consider the following 472-residue polypeptide: MDLFRKKLAVLDLTHGGIPIARKLAALGNDVSGVDVYGTVDQALLGELEEKYGIRCSKAPLPVSDFDLLIAPVHLDPAYPMLIKARSEGKTVLSHHEAVGKILQADPRLSEIKIVEITGVKAKTSTASLLADMLSRSFKVVLHTSRGLEAWKAGIPFLIHRGLSITPGSILIAVEKSLEQEIRPEFFIFEISIGATGTADLGILTTLSPDYGIANNTSLASDAKLQLVLNARPGSTLLLNAGAEKALEAAKGSLAKVLTFKDPFCSDSYLKLADAPDFVLETESGAEKNLTLHFLRRGEELFSASLCPGYNSSAYRTAFVAASAAALELGVGLEAIVSVLEEFRGLSGRMQEKELNGVVLVDNSNSGMDILSAEKALEYALLKKKDEKKGNIILILGEEASQVCEGLPPGSVQGFLEKFGTKCRHIILVGERMEAVAAENASYAGSLPEGLQKASELAGTEDIILSSVKCFR.

119 to 125 is a binding site for ATP; that stretch reads GVKAKTS.

This sequence belongs to the MurCDEF family.

The enzyme catalyses 15,17(3)-seco-F430-17(3)-acid + ATP = coenzyme F430 + ADP + phosphate. Its function is as follows. Involved in the biosynthesis of the unique nickel-containing tetrapyrrole coenzyme F430, the prosthetic group of methyl-coenzyme M reductase (MCR), which plays a key role in methanogenesis and anaerobic methane oxidation. Catalyzes the activation the g-propionate side chain of 15,17(3)-seco-F430-17(3)-acid (seco-F430) for intramolecular C-C bond formation to yield the carbocyclic F ring of coenzyme F430. The polypeptide is Coenzyme F(430) synthetase (Methanosarcina acetivorans (strain ATCC 35395 / DSM 2834 / JCM 12185 / C2A)).